Consider the following 962-residue polypeptide: Thrombospondin-3a (962 aa).

Residues 1–23 (MEQMFVHIWVSLVVLMSVWSAQS) form the signal peptide. Residues 24–196 (DKKQDVPVID…MDTLKLALGG (173 aa)) enclose the Laminin G-like domain. The region spanning 277–318 (PRSRCQPNPCFKGVSCMETFEYPGYRCGPCPDGMTGNGTHCQ) is the EGF-like 1 domain. Cystine bridges form between cysteine 281–cysteine 292, cysteine 286–cysteine 303, cysteine 306–cysteine 317, cysteine 323–cysteine 335, cysteine 329–cysteine 344, cysteine 347–cysteine 371, cysteine 377–cysteine 390, cysteine 384–cysteine 399, cysteine 402–cysteine 414, cysteine 420–cysteine 434, cysteine 428–cysteine 444, cysteine 446–cysteine 457, cysteine 473–cysteine 480, cysteine 485–cysteine 505, cysteine 521–cysteine 541, cysteine 544–cysteine 564, cysteine 580–cysteine 600, cysteine 603–cysteine 623, cysteine 641–cysteine 661, and cysteine 684–cysteine 704. A glycan (N-linked (GlcNAc...) asparagine) is linked at asparagine 313. One can recognise an EGF-like 2; calcium-binding domain in the interval 319–358 (DIDECSEAQPCYTPGACVNTARGFTCESCPPGMWGPPLSG). In terms of domain architecture, EGF-like 3; calcium-binding spans 373–412 (DIDECVDLANACTPNSVCINIIGSFRCGQCKTGYVGNQTA). A glycan (N-linked (GlcNAc...) asparagine) is linked at asparagine 409. Positions 416–458 (PRKSCSSLSFNPCDANAHCVMQRNGDVSCACNVGWAGNGHTCG) constitute an EGF-like 4 domain. 8 TSP type-3 repeats span residues 459 to 493 (KDTD…NSGQ), 494 to 529 (EDAD…NKDQ), 530 to 552 (QNSD…NIDQ), 553 to 588 (KDTD…NPMQ), 589 to 611 (TDRD…NPMQ), 612 to 649 (TDVD…NSSQ), 650 to 692 (LDSD…NPNQ), and 693 to 728 (KDSD…EVTL). Positions 548-704 (PNIDQKDTDS…SDSNGVGDVC (157 aa)) are disordered. A compositionally biased stretch (acidic residues) spans 557-570 (SNGEGDACDDDIDG). A compositionally biased stretch (basic and acidic residues) spans 631 to 641 (GDGHQDTRDNC). An N-linked (GlcNAc...) asparagine glycan is attached at asparagine 646. Acidic residues predominate over residues 652–669 (SDNDGIGDDCDEDDDNDG). The N-linked (GlcNAc...) asparagine glycan is linked to asparagine 710. The cysteines at positions 720 and 941 are disulfide-linked. Positions 732-946 (RAYQTVILDP…LRYRCNDTVP (215 aa)) constitute a TSP C-terminal domain. The N-linked (GlcNAc...) asparagine glycan is linked to asparagine 942.

The protein belongs to the thrombospondin family. In terms of assembly, oligomer; disulfide-linked.

In terms of biological role, adhesive glycoprotein that mediates cell-to-cell and cell-to-matrix interactions. Can bind to fibrinogen, fibronectin, laminin and type V collagen. This is Thrombospondin-3a (thbs3a) from Danio rerio (Zebrafish).